Consider the following 215-residue polypeptide: MATQTNQDHFSGDLRRSWQKIGKLTYGSRQWIVMMASRSAVLKKMLESDEFKTSAKQVGTITLLEMKQEELEAFVEFLYSDGSMLSSKVKQHARALYRAADKYEILRLRELCRSELISSLNSTNSLNLLELAQIPFDKVLNDAALSYIKTNELMFPSFDEFKLFVDNYPNLAVEVMMASLTRTPSTSCSRCGLITYHNQTGTSCCSCGFDYPRRS.

One can recognise a BTB domain in the interval 17-87 (SWQKIGKLTY…LYSDGSMLSS (71 aa)).

Its pathway is protein modification; protein ubiquitination. May act as a substrate-specific adapter of an E3 ubiquitin-protein ligase complex (CUL3-RBX1-BTB) which mediates the ubiquitination and subsequent proteasomal degradation of target proteins. The sequence is that of Putative BTB/POZ domain-containing protein At2g05330 from Arabidopsis thaliana (Mouse-ear cress).